The following is a 347-amino-acid chain: tRNA N6-adenosine threonylcarbamoyltransferase (347 aa).

Fe cation-binding residues include His-117 and His-121. Substrate-binding positions include 140–144, Asp-173, Gly-186, and Asn-280; that span reads LVSGG. Fe cation is bound at residue Asp-308.

The protein belongs to the KAE1 / TsaD family. It depends on Fe(2+) as a cofactor.

Its subcellular location is the cytoplasm. The catalysed reaction is L-threonylcarbamoyladenylate + adenosine(37) in tRNA = N(6)-L-threonylcarbamoyladenosine(37) in tRNA + AMP + H(+). Required for the formation of a threonylcarbamoyl group on adenosine at position 37 (t(6)A37) in tRNAs that read codons beginning with adenine. Is involved in the transfer of the threonylcarbamoyl moiety of threonylcarbamoyl-AMP (TC-AMP) to the N6 group of A37, together with TsaE and TsaB. TsaD likely plays a direct catalytic role in this reaction. The polypeptide is tRNA N6-adenosine threonylcarbamoyltransferase (Psychrobacter sp. (strain PRwf-1)).